A 501-amino-acid chain; its full sequence is UPF0371 protein CD630_08980 (501 aa).

It belongs to the UPF0371 family.

The chain is UPF0371 protein CD630_08980 from Clostridioides difficile (strain 630) (Peptoclostridium difficile).